The chain runs to 278 residues: Probable endonuclease 4 (278 aa).

Residues His-66, His-106, Glu-140, Asp-172, His-175, His-209, Asp-222, His-224, and Glu-254 each contribute to the Zn(2+) site.

Belongs to the AP endonuclease 2 family. The cofactor is Zn(2+).

It carries out the reaction Endonucleolytic cleavage to 5'-phosphooligonucleotide end-products.. In terms of biological role, endonuclease IV plays a role in DNA repair. It cleaves phosphodiester bonds at apurinic or apyrimidinic (AP) sites, generating a 3'-hydroxyl group and a 5'-terminal sugar phosphate. The chain is Probable endonuclease 4 from Haloquadratum walsbyi (strain DSM 16790 / HBSQ001).